The following is a 155-amino-acid chain: Interleukin-36 receptor antagonist protein (155 aa).

Residues Cys-8 and Cys-154 are joined by a disulfide bond.

The protein belongs to the IL-1 family. In terms of assembly, interacts with cargo receptor TMED10; the interaction mediates the translocation from the cytoplasm into the ERGIC (endoplasmic reticulum-Golgi intermediate compartment) and thereby secretion. In terms of tissue distribution, predominantly expressed in skin keratinocytes but not in fibroblasts, endothelial cells or melanocytes. Detected also in the spleen, brain leukocyte and macrophage cell types. Increased in lesional psoriasis skin.

It is found in the cytoplasm. It localises to the secreted. Functionally, inhibits the activity of interleukin-36 (IL36A,IL36B and IL36G) by binding to receptor IL1RL2 and preventing its association with the coreceptor IL1RAP for signaling. Part of the IL-36 signaling system that is thought to be present in epithelial barriers and to take part in local inflammatory response; similar to the IL-1 system with which it shares the coreceptor. Proposed to play a role in skin inflammation. May be involved in the innate immune response to fungal pathogens, such as Aspergillus fumigatus. May activate an anti-inflammatory signaling pathway by recruiting SIGIRR. The chain is Interleukin-36 receptor antagonist protein from Homo sapiens (Human).